Consider the following 362-residue polypeptide: F-box protein At1g54550 (362 aa).

Positions 1–47 constitute an F-box domain; that stretch reads MATVTDLPDDLVREIFSRVPLTSLRAVRSTCKKWNAISKYDILGKKA.

This Arabidopsis thaliana (Mouse-ear cress) protein is F-box protein At1g54550.